Reading from the N-terminus, the 581-residue chain is NADH-quinone oxidoreductase subunit C/D (581 aa).

The interval 1–172 (MSGAELISDL…PPFVMTAARF (172 aa)) is NADH dehydrogenase I subunit C. Residues 196 to 581 (ELMILNYGPH…IDYVMSDVDR (386 aa)) are NADH dehydrogenase I subunit D.

This sequence in the N-terminal section; belongs to the complex I 30 kDa subunit family. The protein in the C-terminal section; belongs to the complex I 49 kDa subunit family. NDH-1 is composed of 13 different subunits. Subunits NuoB, CD, E, F, and G constitute the peripheral sector of the complex.

Its subcellular location is the cell inner membrane. The catalysed reaction is a quinone + NADH + 5 H(+)(in) = a quinol + NAD(+) + 4 H(+)(out). NDH-1 shuttles electrons from NADH, via FMN and iron-sulfur (Fe-S) centers, to quinones in the respiratory chain. The immediate electron acceptor for the enzyme in this species is believed to be ubiquinone. Couples the redox reaction to proton translocation (for every two electrons transferred, four hydrogen ions are translocated across the cytoplasmic membrane), and thus conserves the redox energy in a proton gradient. This is NADH-quinone oxidoreductase subunit C/D from Rhodopseudomonas palustris (strain BisA53).